The chain runs to 899 residues: Suppressor of glycerol defect protein 1 (899 aa).

The segment covering 24 to 33 has biased composition (basic and acidic residues); sequence QDERFSISEG. Disordered regions lie at residues 24–181 and 248–326; these read QDER…VSYP and ETNS…DDSE. A compositionally biased stretch (basic residues) spans 34–49; the sequence is KKRRRGNGKHLSRKEK. A compositionally biased stretch (polar residues) spans 65–77; it reads REINSSRLKSAPT. Acidic residues predominate over residues 103–126; that stretch reads DESESNENWDSDEVLTDEVAEESG. Basic and acidic residues-rich tracts occupy residues 134-143, 162-174, and 251-264; these read ETMKKLESLK, SYEKKHIRNRDTN, and SMRKDDEASEKAFS. Acidic residues predominate over residues 265–292; sequence SDDDLSASDFEDSDGLSESDNDSVADSD. The MIF4G domain maps to 335 to 540; it reads SKKVNSSLNK…DTMSDLKNNR (206 aa). One can recognise an MI domain in the interval 644 to 781; the sequence is DIRRAIFISI…KLDVFKHVPF (138 aa). Serine 736 is subject to Phosphoserine.

It belongs to the CWC22 family. Interacts with PLC1.

Its subcellular location is the nucleus. The protein localises to the nucleolus. In terms of biological role, involved in osmoregulatory glycerol response, probably through its interaction with PLC1 which regulates the expression of GDP1. The polypeptide is Suppressor of glycerol defect protein 1 (SGD1) (Saccharomyces cerevisiae (strain ATCC 204508 / S288c) (Baker's yeast)).